The chain runs to 154 residues: Transcriptional repressor NrdR (154 aa).

A zinc finger lies at cysteine 3–cysteine 34. An ATP-cone domain is found at leucine 46 to aspartate 136.

The protein belongs to the NrdR family. Requires Zn(2+) as cofactor.

Its function is as follows. Negatively regulates transcription of bacterial ribonucleotide reductase nrd genes and operons by binding to NrdR-boxes. The sequence is that of Transcriptional repressor NrdR from Mycobacterium sp. (strain JLS).